Reading from the N-terminus, the 304-residue chain is ATP phosphoribosyltransferase (304 aa).

It belongs to the ATP phosphoribosyltransferase family. Long subfamily. The cofactor is Mg(2+).

Its subcellular location is the cytoplasm. It carries out the reaction 1-(5-phospho-beta-D-ribosyl)-ATP + diphosphate = 5-phospho-alpha-D-ribose 1-diphosphate + ATP. It functions in the pathway amino-acid biosynthesis; L-histidine biosynthesis; L-histidine from 5-phospho-alpha-D-ribose 1-diphosphate: step 1/9. Feedback inhibited by histidine. Catalyzes the condensation of ATP and 5-phosphoribose 1-diphosphate to form N'-(5'-phosphoribosyl)-ATP (PR-ATP). Has a crucial role in the pathway because the rate of histidine biosynthesis seems to be controlled primarily by regulation of HisG enzymatic activity. The chain is ATP phosphoribosyltransferase from Xanthomonas oryzae pv. oryzae (strain MAFF 311018).